We begin with the raw amino-acid sequence, 177 residues long: Isopentenyl-diphosphate Delta-isomerase (177 aa).

Mn(2+) is bound by residues histidine 22 and histidine 28. A Nudix hydrolase domain is found at 26–160 (LRHMAISVFV…PERFTPWLRI (135 aa)). Cysteine 62 is an active-site residue. Histidine 64 provides a ligand contact to Mn(2+). Position 82 (glutamate 82) interacts with Mg(2+). Mn(2+)-binding residues include glutamate 108 and glutamate 110. Glutamate 110 is a catalytic residue.

Belongs to the IPP isomerase type 1 family. It depends on Mg(2+) as a cofactor. Mn(2+) is required as a cofactor.

It is found in the cytoplasm. It catalyses the reaction isopentenyl diphosphate = dimethylallyl diphosphate. It functions in the pathway isoprenoid biosynthesis; dimethylallyl diphosphate biosynthesis; dimethylallyl diphosphate from isopentenyl diphosphate: step 1/1. The protein operates within porphyrin-containing compound metabolism; chlorophyll biosynthesis. Functionally, catalyzes the 1,3-allylic rearrangement of the homoallylic substrate isopentenyl (IPP) to its highly electrophilic allylic isomer, dimethylallyl diphosphate (DMAPP). In Cereibacter sphaeroides (strain KD131 / KCTC 12085) (Rhodobacter sphaeroides), this protein is Isopentenyl-diphosphate Delta-isomerase.